The following is a 137-amino-acid chain: Acidic phospholipase A2 Vur-PL3 (137 aa).

The N-terminal stretch at 1–16 (MRTLWIVAVCLIGVEG) is a signal peptide. 7 cysteine pairs are disulfide-bonded: Cys-42/Cys-131, Cys-44/Cys-60, Cys-59/Cys-111, Cys-65/Cys-137, Cys-66/Cys-104, Cys-73/Cys-97, and Cys-91/Cys-102. Residues Tyr-43, Gly-45, and Gly-47 each coordinate Ca(2+). His-63 is an active-site residue. Asp-64 is a Ca(2+) binding site. Asp-105 is a catalytic residue.

The cofactor is Ca(2+). As to expression, expressed by the venom gland.

It localises to the secreted. It carries out the reaction a 1,2-diacyl-sn-glycero-3-phosphocholine + H2O = a 1-acyl-sn-glycero-3-phosphocholine + a fatty acid + H(+). The protein is Acidic phospholipase A2 Vur-PL3 of Vipera renardi (Steppe viper).